Here is a 223-residue protein sequence, read N- to C-terminus: Uridylate kinase (223 aa).

9–10 is a binding site for ATP; it reads GS. Residue glycine 43 coordinates UMP. Residues glycine 44 and arginine 48 each contribute to the ATP site. UMP is bound by residues aspartate 65 and 112 to 118; that span reads THPGHTT. Residues threonine 137, asparagine 138, tyrosine 143, and aspartate 146 each coordinate ATP.

The protein belongs to the UMP kinase family. Homohexamer.

Its subcellular location is the cytoplasm. The catalysed reaction is UMP + ATP = UDP + ADP. It functions in the pathway pyrimidine metabolism; CTP biosynthesis via de novo pathway; UDP from UMP (UMPK route): step 1/1. Inhibited by UTP. Its function is as follows. Catalyzes the reversible phosphorylation of UMP to UDP. This Methanopyrus kandleri (strain AV19 / DSM 6324 / JCM 9639 / NBRC 100938) protein is Uridylate kinase.